The sequence spans 201 residues: Imidazole glycerol phosphate synthase subunit HisH (201 aa).

The Glutamine amidotransferase type-1 domain occupies 1–201; sequence MVFIADYGAG…LQVLKNFAEF (201 aa). Cysteine 79 (nucleophile) is an active-site residue. Residues histidine 183 and glutamate 185 contribute to the active site.

Heterodimer of HisH and HisF.

It is found in the cytoplasm. The enzyme catalyses 5-[(5-phospho-1-deoxy-D-ribulos-1-ylimino)methylamino]-1-(5-phospho-beta-D-ribosyl)imidazole-4-carboxamide + L-glutamine = D-erythro-1-(imidazol-4-yl)glycerol 3-phosphate + 5-amino-1-(5-phospho-beta-D-ribosyl)imidazole-4-carboxamide + L-glutamate + H(+). It catalyses the reaction L-glutamine + H2O = L-glutamate + NH4(+). It participates in amino-acid biosynthesis; L-histidine biosynthesis; L-histidine from 5-phospho-alpha-D-ribose 1-diphosphate: step 5/9. Its function is as follows. IGPS catalyzes the conversion of PRFAR and glutamine to IGP, AICAR and glutamate. The HisH subunit catalyzes the hydrolysis of glutamine to glutamate and ammonia as part of the synthesis of IGP and AICAR. The resulting ammonia molecule is channeled to the active site of HisF. This Chlorobaculum tepidum (strain ATCC 49652 / DSM 12025 / NBRC 103806 / TLS) (Chlorobium tepidum) protein is Imidazole glycerol phosphate synthase subunit HisH.